The sequence spans 252 residues: 2-succinyl-6-hydroxy-2,4-cyclohexadiene-1-carboxylate synthase (252 aa).

It belongs to the AB hydrolase superfamily. MenH family. As to quaternary structure, monomer.

It catalyses the reaction 5-enolpyruvoyl-6-hydroxy-2-succinyl-cyclohex-3-ene-1-carboxylate = (1R,6R)-6-hydroxy-2-succinyl-cyclohexa-2,4-diene-1-carboxylate + pyruvate. It functions in the pathway quinol/quinone metabolism; 1,4-dihydroxy-2-naphthoate biosynthesis; 1,4-dihydroxy-2-naphthoate from chorismate: step 3/7. Its pathway is quinol/quinone metabolism; menaquinone biosynthesis. Functionally, catalyzes a proton abstraction reaction that results in 2,5-elimination of pyruvate from 2-succinyl-5-enolpyruvyl-6-hydroxy-3-cyclohexene-1-carboxylate (SEPHCHC) and the formation of 2-succinyl-6-hydroxy-2,4-cyclohexadiene-1-carboxylate (SHCHC). This Escherichia coli (strain SE11) protein is 2-succinyl-6-hydroxy-2,4-cyclohexadiene-1-carboxylate synthase.